The following is a 427-amino-acid chain: Cysteate synthase (427 aa).

K104 carries the post-translational modification N6-(pyridoxal phosphate)lysine. 2 residues coordinate pyridoxal 5'-phosphate: N130 and T382.

This sequence belongs to the threonine synthase family. Cysteate synthase subfamily. As to quaternary structure, homotrimer. The cofactor is pyridoxal 5'-phosphate.

It catalyses the reaction O-phospho-L-serine + sulfite + H(+) = L-cysteate + phosphate. The protein operates within cofactor biosynthesis; coenzyme M biosynthesis. Specifically catalyzes the beta-elimination of phosphate from L-phosphoserine and the beta-addition of sulfite to the dehydroalanine intermediate to produce L-cysteate. The protein is Cysteate synthase of Methanocella paludicola (strain DSM 17711 / JCM 13418 / NBRC 101707 / SANAE).